A 187-amino-acid chain; its full sequence is Elongation factor P (187 aa).

This sequence belongs to the elongation factor P family.

It localises to the cytoplasm. The protein operates within protein biosynthesis; polypeptide chain elongation. Functionally, involved in peptide bond synthesis. Stimulates efficient translation and peptide-bond synthesis on native or reconstituted 70S ribosomes in vitro. Probably functions indirectly by altering the affinity of the ribosome for aminoacyl-tRNA, thus increasing their reactivity as acceptors for peptidyl transferase. The protein is Elongation factor P of Synechococcus sp. (strain CC9605).